The following is a 433-amino-acid chain: Ribonuclease T2-like (433 aa).

4 disulfide bridges follow: cysteine 28–cysteine 47, cysteine 36–cysteine 95, cysteine 46–cysteine 171, and cysteine 103–cysteine 163. 2 N-linked (GlcNAc...) asparagine glycosylation sites follow: asparagine 38 and asparagine 71. Active-site residues include histidine 88, glutamate 156, and histidine 160. N-linked (GlcNAc...) asparagine glycosylation is found at asparagine 221 and asparagine 263. The cysteines at positions 247 and 283 are disulfide-linked.

It belongs to the RNase T2 family.

It localises to the vacuole lumen. The protein localises to the cytoplasm. It catalyses the reaction a ribonucleotidyl-ribonucleotide-RNA + H2O = a 3'-end 3'-phospho-ribonucleotide-RNA + a 5'-end dephospho-ribonucleoside-RNA + H(+). Rnase which modulates cell survival under stress conditions. Released from the vacuole to the cytoplasm during stress to promote tRNA and rRNA cleavage and to activate separately a downstream pathway that promotes cell death. Involved in cell size, vacuolar morphology and growth at high temperatures and high salt concentration. The polypeptide is Ribonuclease T2-like (RNY1) (Candida glabrata (strain ATCC 2001 / BCRC 20586 / JCM 3761 / NBRC 0622 / NRRL Y-65 / CBS 138) (Yeast)).